Reading from the N-terminus, the 303-residue chain is Lipase chaperone (303 aa).

Residues 7–23 traverse the membrane as a helical segment; it reads TLAAACAAWLAWWAWPD.

This sequence belongs to the lipase chaperone family.

It is found in the cell inner membrane. May be involved in the folding of the extracellular lipase during its passage through the periplasm. The chain is Lipase chaperone (lifO) from Chromobacterium violaceum (strain ATCC 12472 / DSM 30191 / JCM 1249 / CCUG 213 / NBRC 12614 / NCIMB 9131 / NCTC 9757 / MK).